A 275-amino-acid chain; its full sequence is Elongation factor Ts (275 aa).

The interval 76-79 (TDFV) is involved in Mg(2+) ion dislocation from EF-Tu.

The protein belongs to the EF-Ts family.

Its subcellular location is the cytoplasm. In terms of biological role, associates with the EF-Tu.GDP complex and induces the exchange of GDP to GTP. It remains bound to the aminoacyl-tRNA.EF-Tu.GTP complex up to the GTP hydrolysis stage on the ribosome. This is Elongation factor Ts from Rhodococcus erythropolis (strain PR4 / NBRC 100887).